Here is a 373-residue protein sequence, read N- to C-terminus: Type 2 DNA topoisomerase 6 subunit A (373 aa).

The region spanning 15–153 is the Topo IIA-type catalytic domain; sequence QGDTLAKERL…FHMRPEEDGA (139 aa). Y110 serves as the catalytic O-(5'-phospho-DNA)-tyrosine intermediate. Mg(2+)-binding residues include E206 and D258.

It belongs to the TOP6A family. As to quaternary structure, homodimer. Heterotetramer of two Top6A and two Top6B chains. It depends on Mg(2+) as a cofactor.

It carries out the reaction ATP-dependent breakage, passage and rejoining of double-stranded DNA.. Relaxes both positive and negative superturns and exhibits a strong decatenase activity. The protein is Type 2 DNA topoisomerase 6 subunit A of Methanosarcina acetivorans (strain ATCC 35395 / DSM 2834 / JCM 12185 / C2A).